Here is a 292-residue protein sequence, read N- to C-terminus: Cyclin-dependent kinase A-2 (292 aa).

Residues Y4–F286 enclose the Protein kinase domain. Residues I10 to V18 and K33 contribute to the ATP site. T14 is subject to Phosphothreonine. The residue at position 15 (Y15) is a Phosphotyrosine. Residue D126 is the Proton acceptor of the active site. T160 carries the phosphothreonine modification.

This sequence belongs to the protein kinase superfamily. CMGC Ser/Thr protein kinase family. CDC2/CDKX subfamily. Expressed in the dividing region of the root apex and in differentiated cells such as those in the sclerenchyma, pericycle and parenchyma of the central cylinder. Expressed in the intercalary meristem and the elongation zone of internodes.

It catalyses the reaction L-seryl-[protein] + ATP = O-phospho-L-seryl-[protein] + ADP + H(+). It carries out the reaction L-threonyl-[protein] + ATP = O-phospho-L-threonyl-[protein] + ADP + H(+). The enzyme catalyses [DNA-directed RNA polymerase] + ATP = phospho-[DNA-directed RNA polymerase] + ADP + H(+). The chain is Cyclin-dependent kinase A-2 (CDKA-2) from Oryza sativa subsp. japonica (Rice).